Here is a 314-residue protein sequence, read N- to C-terminus: Serine protease 46 (314 aa).

The Peptidase S1 domain occupies 44–281; the sequence is VVNGKVVEVG…FTQWIKRQIG (238 aa). Residues C69 and C85 are joined by a disulfide bond. Catalysis depends on charge relay system residues H84 and D130. 3 disulfide bridges follow: C164-C239, C197-C219, and C229-C257. Catalysis depends on S233, which acts as the Charge relay system. Residues 293–313 traverse the membrane as a helical segment; the sequence is FLSPFILTGYILLVSLGSLWL.

The protein belongs to the peptidase S1 family.

It is found in the membrane. The sequence is that of Serine protease 46 (Prss46) from Rattus norvegicus (Rat).